A 437-amino-acid polypeptide reads, in one-letter code: Protein translocase subunit SecY (437 aa).

10 helical membrane passes run 19-39, 68-88, 121-141, 156-176, 188-208, 218-238, 274-294, 317-337, 378-398, and 400-420; these read LFTL…APGV, LLQI…SIIL, VALA…GALF, IFTT…VMWL, GMSI…LWAI, WIEF…VVFV, GVIP…IVQF, YIAT…AISF, SLYL…FGGA, and QNFP…LETV.

It belongs to the SecY/SEC61-alpha family. In terms of assembly, component of the Sec protein translocase complex. Heterotrimer consisting of SecY, SecE and SecG subunits. The heterotrimers can form oligomers, although 1 heterotrimer is thought to be able to translocate proteins. Interacts with the ribosome. Interacts with SecDF, and other proteins may be involved. Interacts with SecA.

It is found in the cell membrane. Functionally, the central subunit of the protein translocation channel SecYEG. Consists of two halves formed by TMs 1-5 and 6-10. These two domains form a lateral gate at the front which open onto the bilayer between TMs 2 and 7, and are clamped together by SecE at the back. The channel is closed by both a pore ring composed of hydrophobic SecY resides and a short helix (helix 2A) on the extracellular side of the membrane which forms a plug. The plug probably moves laterally to allow the channel to open. The ring and the pore may move independently. In Streptomyces griseus, this protein is Protein translocase subunit SecY.